Here is a 335-residue protein sequence, read N- to C-terminus: Dolichyl-diphosphooligosaccharide--protein glycosyltransferase subunit MAGT1 (335 aa).

Positions Met1 to Ala29 are cleaved as a signal peptide. Residues Gln30 to Pro184 are Extracellular-facing. The Thioredoxin domain occupies Trp47–Asp175. An N-linked (GlcNAc...) asparagine glycan is attached at Asn71. Cys87 and Cys90 form a disulfide bridge. A helical membrane pass occupies residues Asn185–Leu205. The Cytoplasmic portion of the chain corresponds to Arg206–Asn209. A helical transmembrane segment spans residues Met210–Met230. Residues Thr231–His270 lie on the Extracellular side of the membrane. The chain crosses the membrane as a helical span at residues Ile271 to Thr291. Topologically, residues Ser292–Lys300 are cytoplasmic. The helical transmembrane segment at Ile301 to Phe321 threads the bilayer. The Extracellular segment spans residues Arg322–Ser335.

The protein belongs to the OST3/OST6 family. In terms of assembly, accessory component of the STT3B-containing form of the oligosaccharyltransferase (OST) complex. OST exists in two different complex forms which contain common core subunits RPN1, RPN2, OST48, OST4, DAD1 and TMEM258, either STT3A or STT3B as catalytic subunits, and form-specific accessory subunits. OST can form stable complexes with the Sec61 complex or with both the Sec61 and TRAP complexes. The association of TUSC3 or MAGT1 with the STT3B-containing complex seems to be mutually exclusvice.

It is found in the cell membrane. The protein resides in the endoplasmic reticulum. It localises to the endoplasmic reticulum membrane. The protein operates within protein modification; protein glycosylation. Its function is as follows. Accessory component of the STT3B-containing form of the N-oligosaccharyl transferase (OST) complex which catalyzes the transfer of a high mannose oligosaccharide from a lipid-linked oligosaccharide donor to an asparagine residue within an Asn-X-Ser/Thr consensus motif in nascent polypeptide chains. Involved in N-glycosylation of STT3B-dependent substrates. Specifically required for the glycosylation of a subset of acceptor sites that are near cysteine residues; in this function seems to act redundantly with TUSC3. In its oxidized form proposed to form transient mixed disulfides with a glycoprotein substrate to facilitate access of STT3B to the unmodified acceptor site. Also has oxidoreductase-independent functions in the STT3B-containing OST complex possibly involving substrate recognition. Could indirectly play a role in Mg(2+) transport in epithelial cells. In Pongo abelii (Sumatran orangutan), this protein is Dolichyl-diphosphooligosaccharide--protein glycosyltransferase subunit MAGT1.